The primary structure comprises 353 residues: Protein RecA (353 aa).

67 to 74 is an ATP binding site; that stretch reads GPESSGKT.

The protein belongs to the RecA family.

The protein localises to the cytoplasm. Can catalyze the hydrolysis of ATP in the presence of single-stranded DNA, the ATP-dependent uptake of single-stranded DNA by duplex DNA, and the ATP-dependent hybridization of homologous single-stranded DNAs. It interacts with LexA causing its activation and leading to its autocatalytic cleavage. This Shewanella sediminis (strain HAW-EB3) protein is Protein RecA.